The sequence spans 410 residues: Probable tRNA sulfurtransferase (410 aa).

The THUMP domain occupies 58–167; that stretch reads AELTRRLQEV…RREIFVSVER (110 aa). Residues 185–186, 210–211, Arg267, Gly289, and Gln298 contribute to the ATP site; these read LL and HF.

This sequence belongs to the ThiI family.

The protein localises to the cytoplasm. The catalysed reaction is [ThiI sulfur-carrier protein]-S-sulfanyl-L-cysteine + a uridine in tRNA + 2 reduced [2Fe-2S]-[ferredoxin] + ATP + H(+) = [ThiI sulfur-carrier protein]-L-cysteine + a 4-thiouridine in tRNA + 2 oxidized [2Fe-2S]-[ferredoxin] + AMP + diphosphate. The enzyme catalyses [ThiS sulfur-carrier protein]-C-terminal Gly-Gly-AMP + S-sulfanyl-L-cysteinyl-[cysteine desulfurase] + AH2 = [ThiS sulfur-carrier protein]-C-terminal-Gly-aminoethanethioate + L-cysteinyl-[cysteine desulfurase] + A + AMP + 2 H(+). The protein operates within cofactor biosynthesis; thiamine diphosphate biosynthesis. Catalyzes the ATP-dependent transfer of a sulfur to tRNA to produce 4-thiouridine in position 8 of tRNAs, which functions as a near-UV photosensor. Also catalyzes the transfer of sulfur to the sulfur carrier protein ThiS, forming ThiS-thiocarboxylate. This is a step in the synthesis of thiazole, in the thiamine biosynthesis pathway. The sulfur is donated as persulfide by IscS. The chain is Probable tRNA sulfurtransferase from Nocardia farcinica (strain IFM 10152).